Consider the following 715-residue polypeptide: Beta-galactosidase 9 (715 aa).

The signal sequence occupies residues 1–20 (MSGGAVAFLLLVAAAAVANA). The active-site Proton donor is the glutamate 178. Glutamate 247 (nucleophile) is an active-site residue.

This sequence belongs to the glycosyl hydrolase 35 family.

The protein localises to the secreted. It is found in the extracellular space. Its subcellular location is the apoplast. It catalyses the reaction Hydrolysis of terminal non-reducing beta-D-galactose residues in beta-D-galactosides.. The sequence is that of Beta-galactosidase 9 from Oryza sativa subsp. japonica (Rice).